Here is a 386-residue protein sequence, read N- to C-terminus: Queuine tRNA-ribosyltransferase (386 aa).

Aspartate 102 (proton acceptor) is an active-site residue. Residues 102-106, aspartate 156, glutamine 203, and glycine 230 contribute to the substrate site; that span reads DSGGY. The segment at 261 to 267 is RNA binding; it reads GVGKPDD. Aspartate 280 (nucleophile) is an active-site residue. The RNA binding; important for wobble base 34 recognition stretch occupies residues 285 to 289; that stretch reads TRSGR. Cysteine 318, cysteine 320, cysteine 323, and histidine 349 together coordinate Zn(2+).

It belongs to the queuine tRNA-ribosyltransferase family. As to quaternary structure, homodimer. Within each dimer, one monomer is responsible for RNA recognition and catalysis, while the other monomer binds to the replacement base PreQ1. Zn(2+) serves as cofactor.

It carries out the reaction 7-aminomethyl-7-carbaguanine + guanosine(34) in tRNA = 7-aminomethyl-7-carbaguanosine(34) in tRNA + guanine. It participates in tRNA modification; tRNA-queuosine biosynthesis. In terms of biological role, catalyzes the base-exchange of a guanine (G) residue with the queuine precursor 7-aminomethyl-7-deazaguanine (PreQ1) at position 34 (anticodon wobble position) in tRNAs with GU(N) anticodons (tRNA-Asp, -Asn, -His and -Tyr). Catalysis occurs through a double-displacement mechanism. The nucleophile active site attacks the C1' of nucleotide 34 to detach the guanine base from the RNA, forming a covalent enzyme-RNA intermediate. The proton acceptor active site deprotonates the incoming PreQ1, allowing a nucleophilic attack on the C1' of the ribose to form the product. After dissociation, two additional enzymatic reactions on the tRNA convert PreQ1 to queuine (Q), resulting in the hypermodified nucleoside queuosine (7-(((4,5-cis-dihydroxy-2-cyclopenten-1-yl)amino)methyl)-7-deazaguanosine). The chain is Queuine tRNA-ribosyltransferase from Zymomonas mobilis subsp. mobilis (strain ATCC 31821 / ZM4 / CP4).